The following is a 213-amino-acid chain: ATP-dependent Clp protease proteolytic subunit 1 (213 aa).

Serine 114 (nucleophile) is an active-site residue. Histidine 139 is a catalytic residue.

It belongs to the peptidase S14 family. As to quaternary structure, fourteen ClpP subunits assemble into 2 heptameric rings which stack back to back to give a disk-like structure with a central cavity, resembling the structure of eukaryotic proteasomes.

The protein resides in the cytoplasm. The catalysed reaction is Hydrolysis of proteins to small peptides in the presence of ATP and magnesium. alpha-casein is the usual test substrate. In the absence of ATP, only oligopeptides shorter than five residues are hydrolyzed (such as succinyl-Leu-Tyr-|-NHMec, and Leu-Tyr-Leu-|-Tyr-Trp, in which cleavage of the -Tyr-|-Leu- and -Tyr-|-Trp bonds also occurs).. Functionally, cleaves peptides in various proteins in a process that requires ATP hydrolysis. Has a chymotrypsin-like activity. Plays a major role in the degradation of misfolded proteins. The chain is ATP-dependent Clp protease proteolytic subunit 1 from Pseudomonas aeruginosa (strain ATCC 15692 / DSM 22644 / CIP 104116 / JCM 14847 / LMG 12228 / 1C / PRS 101 / PAO1).